A 229-amino-acid chain; its full sequence is Ras-like protein rasV (229 aa).

40 to 47 (GDGGVGKT) provides a ligand contact to GTP. Residues 62–70 (YDPTIEDSY) carry the Effector region motif. GTP-binding positions include 87-91 (DTAGQ) and 146-149 (NKSD). C226 bears the Cysteine methyl ester mark. C226 carries the S-geranylgeranyl cysteine lipid modification. Residues 227-229 (KVM) constitute a propeptide, removed in mature form.

Belongs to the small GTPase superfamily. Ras family.

It localises to the cell membrane. It catalyses the reaction GTP + H2O = GDP + phosphate + H(+). Ras proteins bind GDP/GTP and possess intrinsic GTPase activity. The polypeptide is Ras-like protein rasV (rasV) (Dictyostelium discoideum (Social amoeba)).